A 547-amino-acid polypeptide reads, in one-letter code: Cytochrome P450 monooxygenase 128 (547 aa).

Residues 9 to 25 form a helical membrane-spanning segment; that stretch reads IPWAAGATLLAWAAYKI. Residues Asn-336 and Asn-438 are each glycosylated (N-linked (GlcNAc...) asparagine). Cys-483 lines the heme pocket.

The protein belongs to the cytochrome P450 family. The cofactor is heme.

The protein resides in the membrane. Its pathway is secondary metabolite biosynthesis. Its function is as follows. Cytochrome P450 monooxygenase that is able to use 7-ethoxycoumarin and testosterone as substrates for oxidation. The sequence is that of Cytochrome P450 monooxygenase 128 from Postia placenta (strain ATCC 44394 / Madison 698-R) (Brown rot fungus).